The chain runs to 164 residues: Transcriptional repressor NrdR (164 aa).

A zinc finger spans residues 3-34; that stretch reads CPKCNYHKSSVVDSRQAEDGNTIRRRRECEQC. In terms of domain architecture, ATP-cone spans 49 to 139; that stretch reads LLVIKKDGTR…VYKSFKDVDE (91 aa).

The protein belongs to the NrdR family. Requires Zn(2+) as cofactor.

Negatively regulates transcription of bacterial ribonucleotide reductase nrd genes and operons by binding to NrdR-boxes. This chain is Transcriptional repressor NrdR, found in Streptococcus pyogenes serotype M5 (strain Manfredo).